A 295-amino-acid polypeptide reads, in one-letter code: Small ribosomal subunit protein uS2 (295 aa).

Serine 2 carries the post-translational modification N-acetylserine. Serine 43 carries the post-translational modification Phosphoserine. N6-acetyllysine is present on lysine 52. An interaction with PPP1R16B region spans residues 54 to 113 (TWEKLLLAARAIVAIENPADVSVISSRNTGQRAVLKFAAATGATPIAGRFTPGTFTNQIQ). An N6-acetyllysine; alternate modification is found at lysine 89. A Glycyl lysine isopeptide (Lys-Gly) (interchain with G-Cter in SUMO2); alternate cross-link involves residue lysine 89. Threonine 97 carries the post-translational modification Phosphothreonine. Laminin-binding stretches follow at residues 161 to 180 (IPCNNKGAHSVGLMWWMLAR) and 205 to 229 (RDPEEIEKEEQAAAEKAVTKEEFQG). 5 [DE]-W-[ST] repeats span residues 230 to 232 (EWT), 247 to 249 (DWS), 266 to 268 (DWS), 275 to 277 (DWS), and 293 to 295 (EWS). Residues 242–295 (QPEVADWSEGVQVPSVPIQQFPTEDWSAQPATEDWSAAPTAQATEWVGATTEWS) are laminin-binding. The tract at residues 266-295 (DWSAQPATEDWSAAPTAQATEWVGATTEWS) is disordered.

It belongs to the universal ribosomal protein uS2 family. In terms of assembly, monomer (37LRP) and homodimer (67LR). Component of the small ribosomal subunit. Mature ribosomes consist of a small (40S) and a large (60S) subunit. The 40S subunit contains about 33 different proteins and 1 molecule of RNA (18S). The 60S subunit contains about 49 different proteins and 3 molecules of RNA (28S, 5.8S and 5S). Interacts with RPS21. Interacts with several laminins including at least LAMB1. Interacts with MDK. The mature dimeric form interacts with PPP1R16B (via its fourth ankyrin repeat). Interacts with PPP1CA only in the presence of PPP1R16B. Post-translationally, acylated. Acylation may be a prerequisite for conversion of the monomeric 37 kDa laminin receptor precursor (37LRP) to the mature dimeric 67 kDa laminin receptor (67LR), and may provide a mechanism for membrane association. In terms of processing, cleaved by stromelysin-3 (ST3) at the cell surface. Cleavage by stromelysin-3 may be a mechanism to alter cell-extracellular matrix interactions. As to expression, expressed in most neurons and in a subset of glial cells. The overall distribution of LR correlates with that reported for laminin-1 but also with brain regions classically associated with prion-related neurodegeneration.

The protein resides in the cell membrane. Its subcellular location is the cytoplasm. It is found in the nucleus. Its function is as follows. Required for the assembly and/or stability of the 40S ribosomal subunit. Required for the processing of the 20S rRNA-precursor to mature 18S rRNA in a late step of the maturation of 40S ribosomal subunits. Also functions as a cell surface receptor for laminin. Plays a role in cell adhesion to the basement membrane and in the consequent activation of signaling transduction pathways. May play a role in cell fate determination and tissue morphogenesis. Also acts as a receptor for several other ligands, including the pathogenic prion protein, viruses, and bacteria. Acts as a PPP1R16B-dependent substrate of PPP1CA. The protein is Small ribosomal subunit protein uS2 (Rpsa) of Rattus norvegicus (Rat).